A 207-amino-acid polypeptide reads, in one-letter code: MGGGSRFQEPVRMSRRKQVTKEKEEDENFKSPNLEAERRRREKLHCRLMALRSHVPIVTNMTKASIVEDAITYIGELQNNVKNLLETFHEMEEAPPEIDEEQTDPMIKPEVETSDLNEEMKKLGIEENVQLCKIGERKFWLKIITEKRDGIFTKFMEVMRFLGFEIIDISLTTSNGAILISASVQTQELCDVEQTKDFLLEVMRSNP.

The segment at 1–38 is disordered; sequence MGGGSRFQEPVRMSRRKQVTKEKEEDENFKSPNLEAER. The 50-residue stretch at 28–77 folds into the bHLH domain; that stretch reads NFKSPNLEAERRRREKLHCRLMALRSHVPIVTNMTKASIVEDAITYIGEL.

As to quaternary structure, homodimer. In terms of tissue distribution, mostly expressed in anthers, and, to a lower extent, in young inflorescences undergoing meiosis and siliques.

It localises to the nucleus. Functionally, transcription factor. Involved in the control of tapetum development. Required for male fertility and pollen differentiation, especially during callose deposition. The protein is Transcription factor DYT1 of Arabidopsis thaliana (Mouse-ear cress).